The primary structure comprises 181 residues: Large ribosomal subunit protein uL5 (181 aa).

The protein belongs to the universal ribosomal protein uL5 family. Part of the 50S ribosomal subunit; contacts the 5S rRNA and probably tRNA. Forms a bridge to the 30S subunit in the 70S ribosome.

Functionally, this is one of the proteins that bind and probably mediate the attachment of the 5S RNA into the large ribosomal subunit, where it forms part of the central protuberance. In the 70S ribosome it contacts protein S13 of the 30S subunit (bridge B1b), connecting the 2 subunits; this bridge is implicated in subunit movement. May contact the P site tRNA; the 5S rRNA and some of its associated proteins might help stabilize positioning of ribosome-bound tRNAs. This Methanococcus aeolicus (strain ATCC BAA-1280 / DSM 17508 / OCM 812 / Nankai-3) protein is Large ribosomal subunit protein uL5.